A 159-amino-acid chain; its full sequence is Trafficking protein particle complex subunit 6A (159 aa).

Residue Ser33 is modified to Phosphoserine.

Belongs to the TRAPP small subunits family. BET3 subfamily. Part of the multisubunit transport protein particle (TRAPP) complex. Heterodimer with TRAPPC3. The heterodimer TRAPPC3-TRAPPC6A interacts with TRAPPC2L. Interacts with TRAPPC2L.

It is found in the golgi apparatus. The protein localises to the cis-Golgi network. Its subcellular location is the endoplasmic reticulum. Functionally, may play a role in vesicular transport during the biogenesis of melanosomes. The polypeptide is Trafficking protein particle complex subunit 6A (Homo sapiens (Human)).